The sequence spans 376 residues: 1-acyl-sn-glycerol-3-phosphate acyltransferase gamma (376 aa).

The Cytoplasmic portion of the chain corresponds to 1-124 (MGLLAYLKTQ…LGSSKVLAKR (124 aa)). Positions 96–101 (HNFEID) match the HXXXXD motif motif. Residues 125–145 (ELLCVPLIGWTWYFLEIVFCK) form a helical membrane-spanning segment. Residues 146 to 316 (RKWEEDRDTV…TLLNFLCWAT (171 aa)) are Lumenal-facing. A helical transmembrane segment spans residues 317–339 (ILLSPLFSFVLGVFASGSPLLIL). Residues 340–376 (TFLGFVGAASFGVRRLIGVTEIEKGSSYGNQELKKKE) are Cytoplasmic-facing.

This sequence belongs to the 1-acyl-sn-glycerol-3-phosphate acyltransferase family. Widely expressed. Mainly expressed in testis, kidney and liver (at protein level).

It localises to the endoplasmic reticulum membrane. It is found in the nucleus envelope. It catalyses the reaction a 1-acyl-sn-glycero-3-phosphate + an acyl-CoA = a 1,2-diacyl-sn-glycero-3-phosphate + CoA. The catalysed reaction is pentadecanoyl-CoA + 1-(9Z-octadecenoyl)-sn-glycero-3-phosphate = 1-(9Z)-octadecenoyl-2-pentadecanoyl-sn-glycero-3-phosphate + CoA. It carries out the reaction heptadecanoyl-CoA + 1-(9Z-octadecenoyl)-sn-glycero-3-phosphate = 1-(9Z)-octadecenoyl-2-heptadecanoyl-sn-glycero-3-phosphate + CoA. The enzyme catalyses 1-(9Z-octadecenoyl)-sn-glycero-3-phosphate + octadecanoyl-CoA = 1-(9Z-octadecenoyl)-2-octadecanoyl-sn-glycero-3-phosphate + CoA. It catalyses the reaction nonadecanoyl-CoA + 1-(9Z-octadecenoyl)-sn-glycero-3-phosphate = 1-(9Z)-octadecenoyl-2-nonadecanoyl-sn-glycero-3-phosphate + CoA. The catalysed reaction is 1-(9Z-octadecenoyl)-sn-glycero-3-phosphate + (5Z,8Z,11Z,14Z)-eicosatetraenoyl-CoA = 1-(9Z)-octadecenoyl-2-(5Z,8Z,11Z,14Z)-eicosatetraenoyl-sn-glycero-3-phosphate + CoA. It carries out the reaction 1-(9Z-octadecenoyl)-sn-glycero-3-phosphate + (9Z)-octadecenoyl-CoA = 1,2-di-(9Z-octadecenoyl)-sn-glycero-3-phosphate + CoA. The enzyme catalyses 1-(9Z-octadecenoyl)-sn-glycero-3-phosphate + (9Z,12Z)-octadecadienoyl-CoA = 1-(9Z)-octadecenoyl-2-(9Z,12Z)-octadecadienoyl-sn-glycero-3-phosphate + CoA. It catalyses the reaction 1-(9Z-octadecenoyl)-sn-glycero-3-phosphocholine + (5Z,8Z,11Z,14Z)-eicosatetraenoyl-CoA = 1-(9Z)-octadecenoyl-2-(5Z,8Z,11Z,14Z)-icosatetraenoyl-sn-glycero-3-phosphocholine + CoA. The catalysed reaction is 1-(9Z-octadecenoyl)-sn-glycero-3-phospho-(1D-myo-inositol) + (5Z,8Z,11Z,14Z)-eicosatetraenoyl-CoA = 1-(9Z-octadecenoyl)-2-(5Z,8Z,11Z,14Z-eicosatetraenoyl)-sn-glycero-3-phospho-1D-myo-inositol + CoA. It carries out the reaction 1-(9Z-octadecenoyl)-sn-glycero-3-phospho-L-serine + (5Z,8Z,11Z,14Z)-eicosatetraenoyl-CoA = 1-(9Z-octadecenoyl)-2-(5Z,8Z,11Z,14Z-eicosatetraenoyl)-sn-glycero-3-phospho-L-serine + CoA. The enzyme catalyses 1-hexadecanoyl-sn-glycero-3-phosphate + (9Z)-octadecenoyl-CoA = 1-hexadecanoyl-2-(9Z-octadecenoyl)-sn-glycero-3-phosphate + CoA. It catalyses the reaction 1-hexadecanoyl-sn-glycero-3-phosphate + (5Z,8Z,11Z,14Z)-eicosatetraenoyl-CoA = 1-hexadecanoyl-2-(5Z,8Z,11Z,14Z-eicosatetraenoyl)-sn-glycero-3-phosphate + CoA. The catalysed reaction is 1-heptadecanoyl-sn-glycero-3-phosphate + (5Z,8Z,11Z,14Z)-eicosatetraenoyl-CoA = 1-heptadecanoyl-2-(5Z,8Z,11Z,14Z)-eicosatetraenoyl-sn-glycero-3-phosphate + CoA. It carries out the reaction 1-octadecanoyl-sn-glycero-3-phosphate + (9Z)-octadecenoyl-CoA = 1-octadecanoyl-2-(9Z-octadecenoyl)-sn-glycero-3-phosphate + CoA. The enzyme catalyses 1-octadecanoyl-sn-glycero-3-phosphate + (5Z,8Z,11Z,14Z)-eicosatetraenoyl-CoA = 1-octadecanoyl-2-(5Z,8Z,11Z,14Z-eicosatetraenoyl)-sn-glycero-3-phosphate + CoA. It catalyses the reaction 1-(9Z-octadecenoyl)-sn-glycero-3-phosphate + hexadecanoyl-CoA = 1-hexadecanoyl-2-(9Z-octadecenoyl)-sn-glycero-3-phosphate + CoA. The catalysed reaction is 1-O-(9Z-octadecenyl)-sn-glycero-3-phosphate + (5Z,8Z,11Z,14Z)-eicosatetraenoyl-CoA = 1-O-(9Z-octadecenyl)-2-(5Z,8Z,11Z,14Z-eicosatetraenoyl)-sn-glycero-3-phosphate + CoA. It carries out the reaction a 1-acyl-sn-glycero-3-phospho-(1D-myo-inositol) + (5Z,8Z,11Z,14Z)-eicosatetraenoyl-CoA = a 1-acyl-2-(5Z,8Z,11Z,14Z-eicosatetraenoyl)-sn-glycero-3-phospho-(1D-myo-inositol) + CoA. It participates in phospholipid metabolism; CDP-diacylglycerol biosynthesis; CDP-diacylglycerol from sn-glycerol 3-phosphate: step 2/3. In males, activity increases in an age-dependent fashion, maybe derived from the induction by sex-hormones. Converts 1-acyl-sn-glycerol-3-phosphate (lysophosphatidic acid or LPA) into 1,2-diacyl-sn-glycerol-3-phosphate (phosphatidic acid or PA) by incorporating an acyl moiety at the sn-2 position of the glycerol backbone. Acts on LPA containing saturated or unsaturated fatty acids C16:0-C20:4 at the sn-1 position using C18:1, C20:4 or C18:2-CoA as the acyl donor. Also acts on lysophosphatidylcholine, lysophosphatidylinositol and lysophosphatidylserine using C18:1 or C20:4-CoA. Has a preference for arachidonoyl-CoA as a donor. Also has a modest lysophosphatidylinositol acyltransferase (LPIAT) activity, converts lysophosphatidylinositol (LPI) into phosphatidylinositol. The sequence is that of 1-acyl-sn-glycerol-3-phosphate acyltransferase gamma from Mus musculus (Mouse).